Consider the following 238-residue polypeptide: Ribose-5-phosphate isomerase A (238 aa).

Substrate is bound by residues 30 to 33 (SGST), 87 to 90 (DGAD), and 100 to 103 (KGGG). Glu-109 (proton acceptor) is an active-site residue. Lys-127 is a binding site for substrate.

It belongs to the ribose 5-phosphate isomerase family. As to quaternary structure, homodimer.

The catalysed reaction is aldehydo-D-ribose 5-phosphate = D-ribulose 5-phosphate. It participates in carbohydrate degradation; pentose phosphate pathway; D-ribose 5-phosphate from D-ribulose 5-phosphate (non-oxidative stage): step 1/1. In terms of biological role, catalyzes the reversible conversion of ribose-5-phosphate to ribulose 5-phosphate. The polypeptide is Ribose-5-phosphate isomerase A (Synechococcus sp. (strain WH7803)).